We begin with the raw amino-acid sequence, 499 residues long: Membrane-associated tyrosine- and threonine-specific cdc2-inhibitory kinase (499 aa).

An N-acetylmethionine modification is found at methionine 1. The tract at residues methionine 1 to proline 29 is disordered. The span at glycine 16–valine 28 shows a compositional bias: pro residues. Phosphothreonine is present on threonine 17. Serine 40 bears the Phosphoserine mark. The tract at residues lysine 42–proline 72 is disordered. Serine 94 and serine 120 each carry phosphoserine. A Protein kinase domain is found at phenylalanine 110–leucine 359. ATP contacts are provided by residues leucine 116–valine 124 and lysine 139. Serine 143 and serine 160 each carry phosphoserine. Aspartate 233 serves as the catalytic Proton acceptor. Mg(2+)-binding residues include asparagine 238, aspartate 251, and glycine 253. A Membrane-association motif motif is present at residues leucine 382–alanine 398. The interaction with PIN1 stretch occupies residues alanine 398–threonine 499. Serine 426 bears the Phosphoserine; by PLK1 mark. The interaction with CDC2-CCNB1 stretch occupies residues glycine 437–threonine 499. A disordered region spans residues glycine 451–proline 485. Phosphoserine is present on residues serine 469, serine 473, and serine 482. The residue at position 495 (threonine 495) is a Phosphothreonine; by PLK1.

It belongs to the protein kinase superfamily. Ser/Thr protein kinase family. WEE1 subfamily. As to quaternary structure, interacts with CDC2-CCNB1 complex. Can also interact with PIN1 when phosphorylated by CDC2-CCNB1. In terms of processing, autophosphorylated. Phosphorylated by CDC2-CCNB1 complexes on undefined serine and threonine residues. The phosphorylation by CDC2-CCNB1 complexes may inhibit the catalytic activity.

It localises to the endoplasmic reticulum membrane. The protein resides in the golgi apparatus membrane. It carries out the reaction L-seryl-[protein] + ATP = O-phospho-L-seryl-[protein] + ADP + H(+). The catalysed reaction is L-threonyl-[protein] + ATP = O-phospho-L-threonyl-[protein] + ADP + H(+). With respect to regulation, negatively regulated by hyperphosphorylation during mitosis. The hyperphosphorylated form does not associate with CCNB1-CDC2 complexes. The PLK1 protein kinase may be required for mitotic phosphorylation. Functionally, acts as a negative regulator of entry into mitosis (G2 to M transition) by phosphorylation of the CDK1 kinase specifically when CDK1 is complexed to cyclins. Mediates phosphorylation of CDK1 predominantly on 'Thr-14'. Also involved in Golgi fragmentation. May be involved in phosphorylation of CDK1 on 'Tyr-15' to a lesser degree, however tyrosine kinase activity is unclear and may be indirect. This Homo sapiens (Human) protein is Membrane-associated tyrosine- and threonine-specific cdc2-inhibitory kinase (PKMYT1).